The sequence spans 132 residues: Fluoride-specific ion channel FluC 1 (132 aa).

4 helical membrane-spanning segments follow: residues 11–31 (AVFA…ALAI), 37–57 (WPWP…YFTT), 70–92 (RPLL…VETI), and 105–125 (AYSV…TVLV). The Na(+) site is built by Gly79 and Thr82.

Belongs to the fluoride channel Fluc/FEX (TC 1.A.43) family.

Its subcellular location is the cell membrane. It catalyses the reaction fluoride(in) = fluoride(out). With respect to regulation, na(+) is not transported, but it plays an essential structural role and its presence is essential for fluoride channel function. Its function is as follows. Fluoride-specific ion channel. Important for reducing fluoride concentration in the cell, thus reducing its toxicity. The sequence is that of Fluoride-specific ion channel FluC 1 from Mycobacterium bovis (strain ATCC BAA-935 / AF2122/97).